We begin with the raw amino-acid sequence, 617 residues long: Zinc finger protein 613 (617 aa).

In terms of domain architecture, KRAB spans 8 to 78; sequence LTLEDVAVEF…ENEIHSQICP (71 aa). 12 C2H2-type zinc fingers span residues 204–226, 232–254, 260–282, 288–310, 316–338, 344–366, 372–394, 400–422, 428–450, 456–478, 484–506, and 512–535; these read HVCTECGKAFLKKSRLIYHQRVH, HGCSICGKAFSRKSGLTEHQRNH, YECTECDKAFRWKSQLNAHQKIH, YICSDCGKGFIKKSRLINHQRVH, HGCSLCGKAFSKRSRLTEHQRTH, YECTECDKAFRWKSQLNAHQKAH, YICRDCGKGFIQKGNLIVHQRIH, YICNECGKGFIQKGNLLIHRRTH, YVCNECGKGFSQKTCLISHQRFH, FVCTECGKSCSHKSGLINHQRIH, YTCSDCGKAFRDKSCLNRHRRTH, and YGCSDCGKAFSHLSCLVYHKGMLH.

The protein belongs to the krueppel C2H2-type zinc-finger protein family.

It localises to the nucleus. Functionally, may be involved in transcriptional regulation. This Homo sapiens (Human) protein is Zinc finger protein 613 (ZNF613).